We begin with the raw amino-acid sequence, 67 residues long: Small ribosomal subunit protein eS31 (67 aa).

Residues cysteine 31, cysteine 34, cysteine 49, and cysteine 52 each coordinate Zn(2+). A C4-type zinc finger spans residues 31–52; sequence CPKCGAGVFMAEHLNRFACGKC.

This sequence belongs to the eukaryotic ribosomal protein eS31 family. In terms of assembly, part of the 30S ribosomal subunit. Requires Zn(2+) as cofactor.

In Methanococcus maripaludis (strain C5 / ATCC BAA-1333), this protein is Small ribosomal subunit protein eS31.